The primary structure comprises 255 residues: tRNA (adenine(58)-N(1))-methyltransferase TrmI (255 aa).

S-adenosyl-L-methionine contacts are provided by residues 104-107, glutamate 125, histidine 130, glutamate 155, and aspartate 170; that span reads SGGL.

Belongs to the class I-like SAM-binding methyltransferase superfamily. TRM61 family. Homotetramer composed of a dimer of dimers.

It carries out the reaction adenosine(58) in tRNA + S-adenosyl-L-methionine = N(1)-methyladenosine(58) in tRNA + S-adenosyl-L-homocysteine + H(+). Its function is as follows. Catalyzes the S-adenosyl-L-methionine-dependent formation of N(1)-methyladenine at position 58 (m1A58) in tRNA. The protein is tRNA (adenine(58)-N(1))-methyltransferase TrmI (trmI) of Thermus thermophilus (strain ATCC 27634 / DSM 579 / HB8).